Consider the following 802-residue polypeptide: Leucine--tRNA ligase (802 aa).

The 'HIGH' region signature appears at 40–51 (PYPSGAGLHVGH). The short motif at 576-580 (KMSKS) is the 'KMSKS' region element. Lysine 579 provides a ligand contact to ATP.

This sequence belongs to the class-I aminoacyl-tRNA synthetase family.

The protein resides in the cytoplasm. It catalyses the reaction tRNA(Leu) + L-leucine + ATP = L-leucyl-tRNA(Leu) + AMP + diphosphate. This Bacillus cereus (strain ATCC 10987 / NRS 248) protein is Leucine--tRNA ligase.